Reading from the N-terminus, the 426-residue chain is Tol-Pal system protein TolB (426 aa).

A signal peptide spans 1–24; sequence MKLKSRYTSLISVVSIFFSSMVMA.

The protein belongs to the TolB family. In terms of assembly, the Tol-Pal system is composed of five core proteins: the inner membrane proteins TolA, TolQ and TolR, the periplasmic protein TolB and the outer membrane protein Pal. They form a network linking the inner and outer membranes and the peptidoglycan layer.

The protein localises to the periplasm. Part of the Tol-Pal system, which plays a role in outer membrane invagination during cell division and is important for maintaining outer membrane integrity. This Haemophilus ducreyi (strain 35000HP / ATCC 700724) protein is Tol-Pal system protein TolB.